A 116-amino-acid chain; its full sequence is Methionine-R-sulfoxide reductase B1 (116 aa).

The MsrB domain maps to 1–106; sequence MSFCSFFGGE…FSSSLKFVPK (106 aa). C23, C26, C71, and C74 together coordinate Zn(2+). U95 (nucleophile) is an active-site residue. Position 95 (U95) is a non-standard amino acid, selenocysteine.

Belongs to the MsrB Met sulfoxide reductase family. It depends on Zn(2+) as a cofactor. Post-translationally, truncated MSRB1/SEPX1 proteins produced by failed UGA/Sec decoding are ubiquitinated by the CRL2(FEM1C) E3 ubiquitin-protein ligase complex.

Its subcellular location is the cytoplasm. The protein resides in the nucleus. It is found in the cytoskeleton. It catalyses the reaction L-methionyl-[protein] + [thioredoxin]-disulfide + H2O = L-methionyl-(R)-S-oxide-[protein] + [thioredoxin]-dithiol. The enzyme catalyses [thioredoxin]-disulfide + L-methionine + H2O = L-methionine (R)-S-oxide + [thioredoxin]-dithiol. Functionally, methionine-sulfoxide reductase that specifically reduces methionine (R)-sulfoxide back to methionine. While in many cases, methionine oxidation is the result of random oxidation following oxidative stress, methionine oxidation is also a post-translational modification that takes place on specific residue. Acts as a regulator of actin assembly by reducing methionine (R)-sulfoxide mediated by MICALs (MICAL1, MICAL2 or MICAL3) on actin, thereby promoting filament repolymerization. Plays a role in innate immunity by reducing oxidized actin, leading to actin repolymerization in macrophages. This chain is Methionine-R-sulfoxide reductase B1 (Msrb1), found in Mus musculus (Mouse).